The primary structure comprises 344 residues: Transcription factor JunB (344 aa).

Glycyl lysine isopeptide (Lys-Gly) (interchain with G-Cter in SUMO2) cross-links involve residues K4, K33, and K36. Over residues 51–65 (KGPGARGPGPEGSGA) the composition is skewed to gly residues. A disordered region spans residues 51–75 (KGPGARGPGPEGSGAGSYFSGQGSD). Residue K81 forms a Glycyl lysine isopeptide (Lys-Gly) (interchain with G-Cter in SUMO2) linkage. Residues T102 and T104 each carry the phosphothreonine modification. At S117 the chain carries Phosphoserine. Residue K138 forms a Glycyl lysine isopeptide (Lys-Gly) (interchain with G-Cter in SUMO2) linkage. Disordered stretches follow at residues 181–202 (NLSSYSPASAPSGGSGTAVGTG) and 237–257 (KEEPQTVPEARSRDATPPVSP). The segment covering 183 to 192 (SSYSPASAPS) has biased composition (low complexity). Position 237 is an N6-acetyllysine; alternate (K237). K237 participates in a covalent cross-link: Glycyl lysine isopeptide (Lys-Gly) (interchain with G-Cter in SUMO1); alternate. K237 is covalently cross-linked (Glycyl lysine isopeptide (Lys-Gly) (interchain with G-Cter in SUMO2); alternate). The segment covering 237–250 (KEEPQTVPEARSRD) has biased composition (basic and acidic residues). S248 is subject to Phosphoserine. Position 252 is a phosphothreonine (T252). A Phosphoserine modification is found at S256. Residues 265–292 (RIKVERKRLRNRLAATKCRKRKLERIAR) form a basic motif region. Positions 265–328 (RIKVERKRLR…AQLKQKVMTH (64 aa)) constitute a bZIP domain. Positions 293–321 (LEDKVKTLKAENAGLSSAAGLLREQVAQL) are leucine-zipper. Residue K340 forms a Glycyl lysine isopeptide (Lys-Gly) (interchain with G-Cter in SUMO2) linkage.

This sequence belongs to the bZIP family. Jun subfamily. As to quaternary structure, binds DNA as a homodimer or as a heterodimer with another member of the Jun/Fos family. Component of an AP-1 transcription factor complex composed of JUN-FOS heterodimers. As part of the AP-1 transcription factor complex, forms heterodimers with FOSB, thereby binding to the AP-1 consensus sequence and stimulating transcription. Interacts with NFE2 (via its WW domains). Post-translationally, ubiquitinated by ITCH, leading to its degradation.

It is found in the nucleus. Transcription factor involved in regulating gene activity following the primary growth factor response. Binds to the DNA sequence 5'-TGA[GC]TCA-3'. Heterodimerizes with proteins of the FOS family to form an AP-1 transcription complex, thereby enhancing its DNA binding activity to an AP-1 consensus sequence 5'-TGA[GC]TCA-3' and enhancing its transcriptional activity. The sequence is that of Transcription factor JunB (Junb) from Mus musculus (Mouse).